Consider the following 180-residue polypeptide: Dual-action ribosomal maturation protein DarP (180 aa).

Residues 1 to 13 (MKPDKTENTEHGI) show a composition bias toward basic and acidic residues. Residues 1–21 (MKPDKTENTEHGIEPVSKTKR) are disordered.

It belongs to the DarP family.

Its subcellular location is the cytoplasm. Member of a network of 50S ribosomal subunit biogenesis factors which assembles along the 30S-50S interface, preventing incorrect 23S rRNA structures from forming. Promotes peptidyl transferase center (PTC) maturation. This is Dual-action ribosomal maturation protein DarP from Methylobacillus flagellatus (strain ATCC 51484 / DSM 6875 / VKM B-1610 / KT).